Here is a 292-residue protein sequence, read N- to C-terminus: NAC domain-containing protein 96 (292 aa).

One can recognise an NAC domain in the interval 6–158 (LPPGFRFHPT…AFVLCRVAMK (153 aa)). Residues 106 to 164 (IGYRKTLVFYKGRAPLGDRSNWIMHEYRLCDDDTSQGSQNLKGAFVLCRVAMKNEIKTN) mediate DNA binding. The interval 171–199 (PSEQTIGSGESSGLSSRVTSPSRDETMPF) is disordered. A compositionally biased stretch (polar residues) spans 172-191 (SEQTIGSGESSGLSSRVTSP).

Interacts with ABF2 and ABF4. Expressed in roots, rosettes leaves, cauline leaves and stems.

Its subcellular location is the nucleus. Transcriptional activator involved in the positive regulation of abscisic acid (ABA) responsive genes. Acts as a positive factor of ABA-mediated responses. Involved in the transcriptional activation of ABA-inducible genes in response to dehydration and osmotic stresses. Plays a positive role in both stomatal closure and water loss under dehydration stress conditions. Acts synergistically with ABF2 to activate the dehydration stress-response factor RD29A transcription. Binds to the consensus core cis-acting elements 5'-CGTA-3' and 5'-CACG-3' at the RD29A promoter. Involved in hypocotyl graft union formation. Required for the auxin-mediated promotion of vascular tissue proliferation during hypocotyl graft attachment. This chain is NAC domain-containing protein 96, found in Arabidopsis thaliana (Mouse-ear cress).